Consider the following 86-residue polypeptide: Arminin 7246 (86 aa).

The signal sequence occupies residues 1-18 (MRPEYAVLFLALIALTYA). Positions 19–57 (RSNEDVREEIKNEIEKDILEDLVEDEGELDDKAIDVNDA) are excised as a propeptide. Alanine 83 bears the Alanine amide mark.

It belongs to the arminin family. As to expression, expressed in entodermal epithelium along the body column.

Its subcellular location is the secreted. It localises to the target cell membrane. In terms of biological role, antimicrobial peptide with a broad-spectrum antimicrobial activity. Keeps its antibacterial activity under a wide range of salt concentrations that mimic physiological conditions of human blood, which is surprising, since Hydra is an obligate freshwater animal with nearly no salt tolerance. Does not affect red blood cells. The chain is Arminin 7246 from Hydra viridissima (Green hydra).